Consider the following 367-residue polypeptide: Phosphoribosylaminoimidazole-succinocarboxamide synthase (367 aa).

The protein belongs to the SAICAR synthetase family.

It catalyses the reaction 5-amino-1-(5-phospho-D-ribosyl)imidazole-4-carboxylate + L-aspartate + ATP = (2S)-2-[5-amino-1-(5-phospho-beta-D-ribosyl)imidazole-4-carboxamido]succinate + ADP + phosphate + 2 H(+). Its pathway is purine metabolism; IMP biosynthesis via de novo pathway; 5-amino-1-(5-phospho-D-ribosyl)imidazole-4-carboxamide from 5-amino-1-(5-phospho-D-ribosyl)imidazole-4-carboxylate: step 1/2. This is Phosphoribosylaminoimidazole-succinocarboxamide synthase from Shewanella putrefaciens (strain CN-32 / ATCC BAA-453).